The primary structure comprises 405 residues: S-adenosylmethionine synthase (405 aa).

141–146 (GQGSVD) is an ATP binding site.

Belongs to the AdoMet synthase 2 family. Mg(2+) serves as cofactor.

The catalysed reaction is L-methionine + ATP + H2O = S-adenosyl-L-methionine + phosphate + diphosphate. It participates in amino-acid biosynthesis; S-adenosyl-L-methionine biosynthesis; S-adenosyl-L-methionine from L-methionine: step 1/1. Catalyzes the formation of S-adenosylmethionine from methionine and ATP. This Methanococcus maripaludis (strain C5 / ATCC BAA-1333) protein is S-adenosylmethionine synthase.